The following is a 386-amino-acid chain: DNase toxin Tse7 (386 aa).

As to quaternary structure, interacts with Tsi7.

It catalyses the reaction Endonucleolytic cleavage to 5'-phosphodinucleotide and 5'-phosphooligonucleotide end-products.. Type VI secretion exported toxin that via to its DNase activity induces growth arrest and ultimately DNA degradation within target cell. The activity is initially neutralized by a cognate immunity protein Tsi7. The polypeptide is DNase toxin Tse7 (Pseudomonas aeruginosa (strain ATCC 15692 / DSM 22644 / CIP 104116 / JCM 14847 / LMG 12228 / 1C / PRS 101 / PAO1)).